Reading from the N-terminus, the 97-residue chain is Class II hydrophobin A (97 aa).

Positions 1–15 (MKSVVFASLIASALA) are cleaved as a signal peptide. Cystine bridges form between C30–C79, C40–C53, and C80–C91.

This sequence belongs to the cerato-ulmin hydrophobin family.

The protein resides in the secreted. The protein localises to the cell wall. It localises to the vacuole. It is found in the cytoplasmic vesicle. Aerial growth, conidiation, and dispersal of filamentous fungi in the environment rely upon a capability of their secreting small amphipathic proteins called hydrophobins (HPBs) with low sequence identity. Class I can self-assemble into an outermost layer of rodlet bundles on aerial cell surfaces, conferring cellular hydrophobicity that supports fungal growth, development and dispersal; whereas Class II form highly ordered films at water-air interfaces through intermolecular interactions but contribute nothing to the rodlet structure. Hyd2A contributes to certain cell wall-related features, such as hydrophobicity but is not involved in cell wall-related events during fungal proliferation in host hemocoel. Does not contribute to conidial hydrophobicity. Involved in insect hemocoel colonization independent of cell hydrophobicity, as well as in the asexual development. This chain is Class II hydrophobin A, found in Beauveria bassiana (strain ARSEF 2860) (White muscardine disease fungus).